An 899-amino-acid polypeptide reads, in one-letter code: Inner tegument protein (899 aa).

The tract at residues 463-899 is interaction with large tegument protein; sequence WNYTWLDATS…SAILDAELSK (437 aa).

This sequence belongs to the herpesviridae inner tegument protein family. In terms of assembly, interacts (via C-terminus) with the large tegument protein/LTP (via N-terminus).

Its subcellular location is the virion tegument. It localises to the host cytoplasm. The protein resides in the host nucleus. It is found in the host Golgi apparatus. The protein localises to the host trans-Golgi network. Functionally, plays an essential role in cytoplasmic secondary envelopment during viral egress. Interacts with the capsid via the large tegument protein/LTP and participates in its transport to the host trans-Golgi network (TGN) where secondary envelopment occurs. Modulates tegumentation and capsid accumulation at the viral assembly complex. The chain is Inner tegument protein (63) from Saimiri sciureus (Common squirrel monkey).